The chain runs to 440 residues: Trigger factor (440 aa).

The 86-residue stretch at 176 to 261 (GDKVVIDYQN…VKSIYVVKDV (86 aa)) folds into the PPIase FKBP-type domain.

Belongs to the FKBP-type PPIase family. Tig subfamily.

Its subcellular location is the cytoplasm. The enzyme catalyses [protein]-peptidylproline (omega=180) = [protein]-peptidylproline (omega=0). In terms of biological role, involved in protein export. Acts as a chaperone by maintaining the newly synthesized protein in an open conformation. Functions as a peptidyl-prolyl cis-trans isomerase. This Ehrlichia canis (strain Jake) protein is Trigger factor.